The chain runs to 428 residues: L-rhamnose isomerase (428 aa).

Mn(2+)-binding residues include His-260, Asp-292, and Asp-294.

Belongs to the rhamnose isomerase family. Mn(2+) serves as cofactor.

Its subcellular location is the cytoplasm. The catalysed reaction is L-rhamnopyranose = L-rhamnulose. The protein operates within carbohydrate degradation; L-rhamnose degradation; glycerone phosphate from L-rhamnose: step 1/3. Functionally, catalyzes the interconversion of L-rhamnose and L-rhamnulose. This chain is L-rhamnose isomerase, found in Enterococcus faecalis (strain ATCC 700802 / V583).